Consider the following 445-residue polypeptide: Exodeoxyribonuclease 7 large subunit (445 aa).

It belongs to the XseA family. In terms of assembly, heterooligomer composed of large and small subunits.

Its subcellular location is the cytoplasm. It catalyses the reaction Exonucleolytic cleavage in either 5'- to 3'- or 3'- to 5'-direction to yield nucleoside 5'-phosphates.. In terms of biological role, bidirectionally degrades single-stranded DNA into large acid-insoluble oligonucleotides, which are then degraded further into small acid-soluble oligonucleotides. The chain is Exodeoxyribonuclease 7 large subunit from Staphylococcus epidermidis (strain ATCC 12228 / FDA PCI 1200).